Here is a 416-residue protein sequence, read N- to C-terminus: UDP-N-acetylglucosamine 1-carboxyvinyltransferase (416 aa).

Residue 22–23 (KN) participates in phosphoenolpyruvate binding. UDP-N-acetyl-alpha-D-glucosamine is bound at residue arginine 91. Cysteine 115 acts as the Proton donor in catalysis. Residue cysteine 115 is modified to 2-(S-cysteinyl)pyruvic acid O-phosphothioketal. UDP-N-acetyl-alpha-D-glucosamine is bound by residues 120-124 (RPIDL), aspartate 305, and isoleucine 327.

Belongs to the EPSP synthase family. MurA subfamily.

The protein resides in the cytoplasm. It catalyses the reaction phosphoenolpyruvate + UDP-N-acetyl-alpha-D-glucosamine = UDP-N-acetyl-3-O-(1-carboxyvinyl)-alpha-D-glucosamine + phosphate. Its pathway is cell wall biogenesis; peptidoglycan biosynthesis. In terms of biological role, cell wall formation. Adds enolpyruvyl to UDP-N-acetylglucosamine. The protein is UDP-N-acetylglucosamine 1-carboxyvinyltransferase of Buchnera aphidicola subsp. Acyrthosiphon pisum (strain Tuc7).